The chain runs to 441 residues: UDP-N-acetylglucosamine--N-acetylmuramyl-(pentapeptide) pyrophosphoryl-undecaprenol N-acetylglucosamine transferase (441 aa).

Residues 28 to 30, N140, R176, S204, I257, and Q302 contribute to the UDP-N-acetyl-alpha-D-glucosamine site; that span reads TGG.

The protein belongs to the glycosyltransferase 28 family. MurG subfamily.

The protein resides in the cell inner membrane. The enzyme catalyses di-trans,octa-cis-undecaprenyl diphospho-N-acetyl-alpha-D-muramoyl-L-alanyl-D-glutamyl-meso-2,6-diaminopimeloyl-D-alanyl-D-alanine + UDP-N-acetyl-alpha-D-glucosamine = di-trans,octa-cis-undecaprenyl diphospho-[N-acetyl-alpha-D-glucosaminyl-(1-&gt;4)]-N-acetyl-alpha-D-muramoyl-L-alanyl-D-glutamyl-meso-2,6-diaminopimeloyl-D-alanyl-D-alanine + UDP + H(+). It functions in the pathway cell wall biogenesis; peptidoglycan biosynthesis. Its function is as follows. Cell wall formation. Catalyzes the transfer of a GlcNAc subunit on undecaprenyl-pyrophosphoryl-MurNAc-pentapeptide (lipid intermediate I) to form undecaprenyl-pyrophosphoryl-MurNAc-(pentapeptide)GlcNAc (lipid intermediate II). This chain is UDP-N-acetylglucosamine--N-acetylmuramyl-(pentapeptide) pyrophosphoryl-undecaprenol N-acetylglucosamine transferase, found in Xanthomonas oryzae pv. oryzae (strain KACC10331 / KXO85).